The primary structure comprises 206 residues: Dephospho-CoA kinase (206 aa).

One can recognise a DPCK domain in the interval 4 to 200 (IVALTGGIGS…HRYLKLATAA (197 aa)). Position 12-17 (12-17 (GSGKST)) interacts with ATP.

This sequence belongs to the CoaE family.

It is found in the cytoplasm. The enzyme catalyses 3'-dephospho-CoA + ATP = ADP + CoA + H(+). It functions in the pathway cofactor biosynthesis; coenzyme A biosynthesis; CoA from (R)-pantothenate: step 5/5. Functionally, catalyzes the phosphorylation of the 3'-hydroxyl group of dephosphocoenzyme A to form coenzyme A. In Yersinia pestis, this protein is Dephospho-CoA kinase.